The chain runs to 86 residues: Large ribosomal subunit protein uL23 (86 aa).

The protein belongs to the universal ribosomal protein uL23 family. In terms of assembly, part of the 50S ribosomal subunit. Contacts protein L29.

In terms of biological role, binds to 23S rRNA. One of the proteins that surrounds the polypeptide exit tunnel on the outside of the ribosome. The chain is Large ribosomal subunit protein uL23 from Pyrococcus horikoshii (strain ATCC 700860 / DSM 12428 / JCM 9974 / NBRC 100139 / OT-3).